A 164-amino-acid polypeptide reads, in one-letter code: Nitric oxide synthase, inducible (164 aa).

Phenylalanine 3 lines the (6R)-L-erythro-5,6,7,8-tetrahydrobiopterin pocket. Tyrosine 18 contributes to the heme b binding site. The tract at residues 42-62 is calmodulin-binding; sequence FKGLIRAVLFSQTLIKSALAK. In terms of domain architecture, Flavodoxin-like spans 66–164; it reads CTVLYATETG…SRMYPHFCAF (99 aa). FMN contacts are provided by threonine 72, glutamate 73, threonine 74, lysine 76, serine 77, serine 118, threonine 119, serine 155, and cysteine 162.

This sequence belongs to the NOS family. In terms of assembly, homodimer. It depends on heme b as a cofactor. FAD is required as a cofactor. FMN serves as cofactor. The cofactor is (6R)-L-erythro-5,6,7,8-tetrahydrobiopterin.

The protein localises to the cytoplasm. Its subcellular location is the cytosol. The catalysed reaction is 2 L-arginine + 3 NADPH + 4 O2 + H(+) = 2 L-citrulline + 2 nitric oxide + 3 NADP(+) + 4 H2O. Its activity is regulated as follows. Not stimulated by calcium/calmodulin. In terms of biological role, produces nitric oxide (NO) which is a messenger molecule with diverse functions throughout the body. In macrophages, NO mediates tumoricidal and bactericidal actions. Also has nitrosylase activity and mediates cysteine S-nitrosylation of cytoplasmic target proteins such COX2. The sequence is that of Nitric oxide synthase, inducible (nos2) from Carassius auratus (Goldfish).